The chain runs to 139 residues: Hydrogenase maturation factor HypA (139 aa).

His2 contacts Ni(2+). The Zn(2+) site is built by Cys73, Cys76, Cys110, and Cys113.

This sequence belongs to the HypA/HybF family.

Functionally, involved in the maturation of [NiFe] hydrogenases. Required for nickel insertion into the metal center of the hydrogenase. In Thermococcus onnurineus (strain NA1), this protein is Hydrogenase maturation factor HypA.